A 261-amino-acid polypeptide reads, in one-letter code: Fructoselysine 6-kinase (261 aa).

This sequence belongs to the carbohydrate kinase PfkB family. As to quaternary structure, monomer.

The catalysed reaction is N(6)-(D-fructosyl)-L-lysine + ATP = N(6)-(6-phospho-D-fructosyl)-L-lysine + ADP + H(+). Its pathway is carbohydrate metabolism; fructoselysine degradation; D-glucose 6-phosphate and lysine from fructoselysine: step 1/2. Its function is as follows. Catalyzes the ATP-dependent phosphorylation of fructoselysine to fructoselysine 6-phosphate. May function in a fructoselysine degradation pathway that allows S.flexneri to grow on fructoselysine or psicoselysine. This chain is Fructoselysine 6-kinase (frlD), found in Shigella flexneri.